Reading from the N-terminus, the 169-residue chain is Ribosome maturation factor RimM (169 aa).

A PRC barrel domain is found at 92–166 (NKEYYWNDIF…IVIDLTNLNN (75 aa)).

This sequence belongs to the RimM family. As to quaternary structure, binds ribosomal protein uS19.

The protein resides in the cytoplasm. Functionally, an accessory protein needed during the final step in the assembly of 30S ribosomal subunit, possibly for assembly of the head region. Essential for efficient processing of 16S rRNA. May be needed both before and after RbfA during the maturation of 16S rRNA. It has affinity for free ribosomal 30S subunits but not for 70S ribosomes. The sequence is that of Ribosome maturation factor RimM from Buchnera aphidicola subsp. Cinara cedri (strain Cc).